Reading from the N-terminus, the 217-residue chain is Probable transaldolase (217 aa).

The active-site Schiff-base intermediate with substrate is the K84.

It belongs to the transaldolase family. Type 3B subfamily.

It localises to the cytoplasm. It carries out the reaction D-sedoheptulose 7-phosphate + D-glyceraldehyde 3-phosphate = D-erythrose 4-phosphate + beta-D-fructose 6-phosphate. Its pathway is carbohydrate degradation; pentose phosphate pathway; D-glyceraldehyde 3-phosphate and beta-D-fructose 6-phosphate from D-ribose 5-phosphate and D-xylulose 5-phosphate (non-oxidative stage): step 2/3. In terms of biological role, transaldolase is important for the balance of metabolites in the pentose-phosphate pathway. In Roseiflexus sp. (strain RS-1), this protein is Probable transaldolase.